Consider the following 427-residue polypeptide: Glutamate-1-semialdehyde 2,1-aminomutase 1 (427 aa).

An N6-(pyridoxal phosphate)lysine modification is found at Lys267.

This sequence belongs to the class-III pyridoxal-phosphate-dependent aminotransferase family. HemL subfamily. As to quaternary structure, homodimer. The cofactor is pyridoxal 5'-phosphate.

It localises to the cytoplasm. It catalyses the reaction (S)-4-amino-5-oxopentanoate = 5-aminolevulinate. Its pathway is porphyrin-containing compound metabolism; protoporphyrin-IX biosynthesis; 5-aminolevulinate from L-glutamyl-tRNA(Glu): step 2/2. The polypeptide is Glutamate-1-semialdehyde 2,1-aminomutase 1 (Staphylococcus epidermidis (strain ATCC 35984 / DSM 28319 / BCRC 17069 / CCUG 31568 / BM 3577 / RP62A)).